The primary structure comprises 183 residues: Glutathione-regulated potassium-efflux system ancillary protein KefG (183 aa).

Belongs to the NAD(P)H dehydrogenase (quinone) family. KefG subfamily. In terms of assembly, interacts with KefB.

It localises to the cell inner membrane. It carries out the reaction a quinone + NADH + H(+) = a quinol + NAD(+). The enzyme catalyses a quinone + NADPH + H(+) = a quinol + NADP(+). Regulatory subunit of a potassium efflux system that confers protection against electrophiles. Required for full activity of KefB. The protein is Glutathione-regulated potassium-efflux system ancillary protein KefG of Serratia proteamaculans (strain 568).